The primary structure comprises 182 residues: Orotate phosphoribosyltransferase (182 aa).

Residues Arg-91, Lys-92, Lys-95, His-97, and Glu-117–Ser-125 contribute to the 5-phospho-alpha-D-ribose 1-diphosphate site. Orotate-binding residues include Thr-121 and Arg-149.

The protein belongs to the purine/pyrimidine phosphoribosyltransferase family. PyrE subfamily. Homodimer. It depends on Mg(2+) as a cofactor.

It carries out the reaction orotidine 5'-phosphate + diphosphate = orotate + 5-phospho-alpha-D-ribose 1-diphosphate. The protein operates within pyrimidine metabolism; UMP biosynthesis via de novo pathway; UMP from orotate: step 1/2. Catalyzes the transfer of a ribosyl phosphate group from 5-phosphoribose 1-diphosphate to orotate, leading to the formation of orotidine monophosphate (OMP). The sequence is that of Orotate phosphoribosyltransferase from Pyrococcus abyssi (strain GE5 / Orsay).